Reading from the N-terminus, the 255-residue chain is ParA family protein TC_0871 (255 aa).

It belongs to the ParA family.

The chain is ParA family protein TC_0871 from Chlamydia muridarum (strain MoPn / Nigg).